The chain runs to 370 residues: Tryptophan--tRNA ligase (370 aa).

The 'HIGH' region motif lies at 75–83 (PSGKMHFGH). Positions 255-259 (KMSSS) match the 'KMSKS' region motif.

It belongs to the class-I aminoacyl-tRNA synthetase family.

It localises to the cytoplasm. It carries out the reaction tRNA(Trp) + L-tryptophan + ATP = L-tryptophyl-tRNA(Trp) + AMP + diphosphate + H(+). The polypeptide is Tryptophan--tRNA ligase (Methanocaldococcus jannaschii (strain ATCC 43067 / DSM 2661 / JAL-1 / JCM 10045 / NBRC 100440) (Methanococcus jannaschii)).